The following is a 113-amino-acid chain: Small ribosomal subunit protein bS6 (113 aa).

Belongs to the bacterial ribosomal protein bS6 family.

Binds together with bS18 to 16S ribosomal RNA. The sequence is that of Small ribosomal subunit protein bS6 (rpsF) from Buchnera aphidicola subsp. Acyrthosiphon pisum (strain APS) (Acyrthosiphon pisum symbiotic bacterium).